A 300-amino-acid chain; its full sequence is Cell adhesion molecule CEACAM19 (300 aa).

A signal peptide spans Met1–Ala32. Over Ala33–Gly157 the chain is Extracellular. Asn104 is a glycosylation site (N-linked (GlcNAc...) asparagine). A helical membrane pass occupies residues Ile158–Ala178. Over Tyr179–Ser300 the chain is Cytoplasmic. Residues Ser259–Ala291 form a disordered region.

It belongs to the immunoglobulin superfamily. CEA family. Ubiquitous with highest expression in prostate, uterus, fetal brain, mammary gland, adrenal gland, skeletal muscle, small intestine, and kidney, and lower expression in lung, cerebellum, testis, liver, pancreas, bone marrow and ovary.

It localises to the membrane. This chain is Cell adhesion molecule CEACAM19, found in Homo sapiens (Human).